The primary structure comprises 610 residues: UvrABC system protein C (610 aa).

A GIY-YIG domain is found at 16–94; the sequence is SQPGVYRMYD…IKLYQPRYNV (79 aa). The UVR domain maps to 204–239; it reads DQVLTQLISRMETASQNLEFEEAARIRDQIQAVRRV.

The protein belongs to the UvrC family. Interacts with UvrB in an incision complex.

The protein localises to the cytoplasm. The UvrABC repair system catalyzes the recognition and processing of DNA lesions. UvrC both incises the 5' and 3' sides of the lesion. The N-terminal half is responsible for the 3' incision and the C-terminal half is responsible for the 5' incision. The protein is UvrABC system protein C of Escherichia coli O139:H28 (strain E24377A / ETEC).